The primary structure comprises 474 residues: Glutamate--tRNA ligase (474 aa).

Residues 10 to 20 (PSPTGYLHIGG) carry the 'HIGH' region motif. Zn(2+)-binding residues include Cys107, Cys109, Cys134, and Asp136. The 'KMSKS' region signature appears at 244–248 (RLSKR). Residue Lys247 participates in ATP binding.

The protein belongs to the class-I aminoacyl-tRNA synthetase family. Glutamate--tRNA ligase type 1 subfamily. As to quaternary structure, monomer. It depends on Zn(2+) as a cofactor.

It localises to the cytoplasm. It carries out the reaction tRNA(Glu) + L-glutamate + ATP = L-glutamyl-tRNA(Glu) + AMP + diphosphate. Functionally, catalyzes the attachment of glutamate to tRNA(Glu) in a two-step reaction: glutamate is first activated by ATP to form Glu-AMP and then transferred to the acceptor end of tRNA(Glu). The protein is Glutamate--tRNA ligase of Anaeromyxobacter sp. (strain K).